The primary structure comprises 156 residues: Small ribosomal subunit protein eS10 (156 aa).

The interval 91–156 (LKRQTRPEAA…FGRGRQEQEE (66 aa)) is disordered. Residues 95–119 (TRPEAARPRPKEGAPRAQVGEDRAG) are compositionally biased toward basic and acidic residues.

It belongs to the eukaryotic ribosomal protein eS10 family.

The protein localises to the cytoplasm. The polypeptide is Small ribosomal subunit protein eS10 (RPS10) (Lumbricus rubellus (Humus earthworm)).